Here is an 86-residue protein sequence, read N- to C-terminus: Small ribosomal subunit protein bS18 (86 aa).

It belongs to the bacterial ribosomal protein bS18 family. As to quaternary structure, part of the 30S ribosomal subunit. Forms a tight heterodimer with protein bS6.

Binds as a heterodimer with protein bS6 to the central domain of the 16S rRNA, where it helps stabilize the platform of the 30S subunit. This Herpetosiphon aurantiacus (strain ATCC 23779 / DSM 785 / 114-95) protein is Small ribosomal subunit protein bS18.